A 113-amino-acid polypeptide reads, in one-letter code: U11-theraphotoxin-Hhn1a (113 aa).

The signal sequence occupies residues 1-21 (MDTVRVAFLLVLVLAVSLGQA). A propeptide spanning residues 22–74 (DKDENRMEMQEKTEQGKSYLDFAENLLLQKLEELEAKLLEEDSEESRNSRQKR) is cleaved from the precursor. Basic and acidic residues predominate over residues 60-69 (LEEDSEESRN). The tract at residues 60–83 (LEEDSEESRNSRQKRCIGEGVPCD) is disordered. Cystine bridges form between cysteine 75/cysteine 90, cysteine 82/cysteine 95, and cysteine 89/cysteine 110.

Belongs to the neurotoxin 14 (magi-1) family. 01 (HNTX-16) subfamily. In terms of tissue distribution, expressed by the venom gland.

The protein resides in the secreted. Its function is as follows. Probable ion channel inhibitor. The polypeptide is U11-theraphotoxin-Hhn1a (Cyriopagopus hainanus (Chinese bird spider)).